A 351-amino-acid chain; its full sequence is Trans-enoyl reductase grgB (351 aa).

Positions 10–346 (GAESGGYRLA…GKVHAKKLVV (337 aa)) constitute an Enoyl reductase (ER) domain. Residues 161 to 164 (ATAT), 184 to 187 (SPAN), Tyr-202, 249 to 250 (LE), and 339 to 340 (VH) contribute to the NADP(+) site.

This sequence belongs to the zinc-containing alcohol dehydrogenase family.

The protein operates within secondary metabolite biosynthesis. Its function is as follows. Trans-enoyl reductase; part of the gene cluster that mediates the biosynthesis of gregatin A, a fungal polyketide featuring an alkylated furanone core. The PKS grgA synthesizes C11 and C4 polyketide chains in the presence and absence of the trans-enoyl reductase grgB, respectively. The polyketide transferase grgF is then responsible for the fusion of the two carbon chains to produce the furanone skeleton of gregatin A. Next, the cytochrome P450 monooxygenase grgG accepts performs the oxidative cyclization to furnish the gregatin scaffold and leads to the formation of desmethylgregatin A. Finally, the O-methyltransferase grgD methylates the carboxyl group of desmethylgregatin A to provide gregatin A. This is Trans-enoyl reductase grgB from Penicillium sp.